We begin with the raw amino-acid sequence, 1733 residues long: Desertorin synthase (1733 aa).

The tract at residues 21-358 (RIRQQSRSSR…HAPTRDLTEW (338 aa)) is N-terminal acylcarrier protein transacylase domain (SAT). The Ketosynthase family 3 (KS3) domain occupies 372–799 (DCRIAVVGMS…GGNTALLLEE (428 aa)). The span at 406 to 422 (HVPPDRYDVQSHTDPTG) shows a compositional bias: basic and acidic residues. A disordered region spans residues 406–429 (HVPPDRYDVQSHTDPTGRRMNTSQ). Catalysis depends on for beta-ketoacyl synthase activity residues C544, H679, and H718. Positions 903 to 1211 (FVFSGQGSFY…DNWHTLAGSM (309 aa)) are malonyl-CoA:ACP transacylase (MAT) domain. The segment at 1288–1420 (HRIVEETFWA…GTVSVGNAAS (133 aa)) is N-terminal hotdog fold. Positions 1288–1598 (HRIVEETFWA…LRPLPRILMH (311 aa)) constitute a PKS/mFAS DH domain. Residues 1299–1594 (GGRVVMESNV…AGVTLRPLPR (296 aa)) form a product template (PT) domain region. H1320 (proton acceptor; for dehydratase activity) is an active-site residue. Residues 1448–1598 (ADRLTRDTVY…LRPLPRILMH (151 aa)) are C-terminal hotdog fold. Catalysis depends on D1506, which acts as the Proton donor; for dehydratase activity. A disordered region spans residues 1608-1659 (HNWGNSPAKPEAKPEMVPTSGSSSAAGSPSGSSAGPLSIPERLADPSETSFQ). Low complexity predominate over residues 1627–1643 (SGSSSAAGSPSGSSAGP). The Carrier domain maps to 1659–1733 (QSKASKVSKA…TVGEVKRQML (75 aa)). An O-(pantetheine 4'-phosphoryl)serine modification is found at S1696.

Pantetheine 4'-phosphate is required as a cofactor.

It functions in the pathway secondary metabolite biosynthesis. Non-reducing polyketide synthase; part of the gene cluster that mediates the biosynthesis of the bicoumarin desertorin. The non-reducing polyketide synthase desS first catalyzes the formation of the pentaketidic 4,7-dihydroxy-5-methylcoumarin from acetyl coenzyme A and 4 malonyl coenzyme A molecules. Further O-methylation by desB leads to the formation of 7-demethylsiderin. Then, an oxidative phenol coupling catalyzed by the cytochrome P450 monooxygenase desC forms the 6,8'-dimer M-desertorin A via dimerization the monomeric precursor, 7-demethylsiderin. M-desertorin A is further converted to M-desertorin C. The protein is Desertorin synthase of Aspergillus desertorum (Emericella desertorum).